We begin with the raw amino-acid sequence, 323 residues long: Voltage-dependent calcium channel gamma-2 subunit (323 aa).

Residues 10–30 traverse the membrane as a helical segment; that stretch reads MLLTTVGAFAAFSLMTIAVGT. Asn-48 carries an N-linked (GlcNAc...) asparagine glycan. Helical transmembrane passes span 104–124, 134–154, and 182–202; these read SSIF…CIAA, IILS…IGII, and FGAL…HMFI. The interval 233-261 is disordered; sequence YQRRSRSSSRSTEPSHSRDASPVGVKGFN. Ser-253 bears the Phosphoserine mark. Tyr-271 is subject to Phosphotyrosine. Residue Thr-321 is modified to Phosphothreonine; by PKA.

The protein belongs to the PMP-22/EMP/MP20 family. CACNG subfamily. The L-type calcium channel is composed of five subunits: alpha-1, alpha-2/delta, beta and gamma. Interacts with the PDZ domains of DLG4/PSD-95 and DLG1/SAP97. May interact with GOPC. Acts as an auxiliary subunit for AMPA-selective glutamate receptors (AMPARs). Found in a complex with GRIA1, GRIA2, GRIA3, GRIA4, CNIH2, CNIH3, CACNG3, CACNG4, CACNG5, CACNG7 and CACNG8. Interacts with GRIA1 and GRIA2. Interacts with MPP2. In terms of processing, phosphorylation of Thr-321 by PKA impairs interaction with DLG1 and DLG4. In terms of tissue distribution, brain.

Its subcellular location is the membrane. The protein localises to the synapse. The protein resides in the synaptosome. Its function is as follows. Regulates the trafficking and gating properties of AMPA-selective glutamate receptors (AMPARs). Promotes their targeting to the cell membrane and synapses and modulates their gating properties by slowing their rates of activation, deactivation and desensitization. Does not show subunit-specific AMPA receptor regulation and regulates all AMPAR subunits. Thought to stabilize the calcium channel in an inactivated (closed) state. The chain is Voltage-dependent calcium channel gamma-2 subunit (Cacng2) from Mus musculus (Mouse).